Consider the following 366-residue polypeptide: Glutamate 5-kinase (366 aa).

Residue Lys17 participates in ATP binding. Residues Ser57, Asp144, and Asn156 each coordinate substrate. ATP is bound by residues 176 to 177 (SD) and 216 to 222 (TGGMASK). Positions 278-352 (QGILHIDEGA…GKSTQELPAE (75 aa)) constitute a PUA domain.

Belongs to the glutamate 5-kinase family.

The protein resides in the cytoplasm. The enzyme catalyses L-glutamate + ATP = L-glutamyl 5-phosphate + ADP. Its pathway is amino-acid biosynthesis; L-proline biosynthesis; L-glutamate 5-semialdehyde from L-glutamate: step 1/2. Its function is as follows. Catalyzes the transfer of a phosphate group to glutamate to form L-glutamate 5-phosphate. The sequence is that of Glutamate 5-kinase from Rhodococcus opacus (strain B4).